Reading from the N-terminus, the 894-residue chain is DNA mismatch repair protein MutS (894 aa).

Position 629 to 636 (Gly-629 to Ser-636) interacts with ATP. The disordered stretch occupies residues Thr-819 to Glu-840.

This sequence belongs to the DNA mismatch repair MutS family.

This protein is involved in the repair of mismatches in DNA. It is possible that it carries out the mismatch recognition step. This protein has a weak ATPase activity. The polypeptide is DNA mismatch repair protein MutS (Cupriavidus pinatubonensis (strain JMP 134 / LMG 1197) (Cupriavidus necator (strain JMP 134))).